Consider the following 134-residue polypeptide: Small ribosomal subunit protein uS8c (134 aa).

Belongs to the universal ribosomal protein uS8 family. In terms of assembly, part of the 30S ribosomal subunit.

It is found in the plastid. The protein resides in the chloroplast. Its function is as follows. One of the primary rRNA binding proteins, it binds directly to 16S rRNA central domain where it helps coordinate assembly of the platform of the 30S subunit. The protein is Small ribosomal subunit protein uS8c (rps8) of Panax ginseng (Korean ginseng).